The following is a 353-amino-acid chain: Protein O-mannose kinase (353 aa).

Residues 1 to 19 (MEKKAHFVKRDFPPREAPS) lie on the Cytoplasmic side of the membrane. Residues 20–40 (LLLLLLVVAVLLLNALLYLYL) traverse the membrane as a helical; Signal-anchor for type II membrane protein segment. The Lumenal segment spans residues 41 to 353 (GNLHGSSGRA…AAMPSTREML (313 aa)). In terms of domain architecture, Protein kinase spans 83–353 (VRKLKCVGEG…AAMPSTREML (271 aa)). Residues Asn163 and Asn237 are each glycosylated (N-linked (GlcNAc...) asparagine).

This sequence belongs to the protein kinase superfamily. Ser/Thr protein kinase family. STKL subfamily.

It localises to the endoplasmic reticulum membrane. The catalysed reaction is 3-O-[beta-D-GalNAc-(1-&gt;3)-beta-D-GlcNAc-(1-&gt;4)-alpha-D-Man]-L-Thr-[protein] + ATP = 3-O-[beta-D-GalNAc-(1-&gt;3)-beta-D-GlcNAc-(1-&gt;4)-(O-6-P-alpha-D-Man)]-Thr-[protein] + ADP + H(+). Protein O-mannose kinase that specifically mediates phosphorylation at the 6-position of an O-mannose of the trisaccharide (N-acetylgalactosamine (GalNAc)-beta-1,3-N-acetylglucosamine (GlcNAc)-beta-1,4-mannose) to generate phosphorylated O-mannosyl trisaccharide (N-acetylgalactosamine-beta-1,3-N-acetylglucosamine-beta-1,4-(phosphate-6-)mannose). Phosphorylated O-mannosyl trisaccharide is a carbohydrate structure present in alpha-dystroglycan (DAG1), which is required for binding laminin G-like domain-containing extracellular proteins with high affinity. Only shows kinase activity when the GalNAc-beta-3-GlcNAc-beta-terminus is linked to the 4-position of O-mannose, suggesting that this disaccharide serves as the substrate recognition motif. This is Protein O-mannose kinase (POMK) from Gallus gallus (Chicken).